The chain runs to 226 residues: Late protein I226R (226 aa).

The N-terminal stretch at 1–16 (MKMETFLVCLFHNADG) is a signal peptide. N-linked (GlcNAc...) asparagine; by host glycosylation is found at asparagine 142 and asparagine 164.

It belongs to the asfivirus I226R family.

Its function is as follows. Plays a role in the inhibition of host NF-kappa-B and IRF3 signaling pathways. Mechanistically, promotes the degradation of host IKBKG through enhancing its ubiquitination leading to inhibition of both pathways. This African swine fever virus (isolate Tick/South Africa/Pretoriuskop Pr4/1996) (ASFV) protein is Late protein I226R.